The chain runs to 186 residues: Peptide deformylase (186 aa).

Fe cation contacts are provided by C99 and H141. Residue E142 is part of the active site. H145 contacts Fe cation.

The protein belongs to the polypeptide deformylase family. Fe(2+) is required as a cofactor.

The enzyme catalyses N-terminal N-formyl-L-methionyl-[peptide] + H2O = N-terminal L-methionyl-[peptide] + formate. In terms of biological role, removes the formyl group from the N-terminal Met of newly synthesized proteins. Requires at least a dipeptide for an efficient rate of reaction. N-terminal L-methionine is a prerequisite for activity but the enzyme has broad specificity at other positions. The polypeptide is Peptide deformylase (Chlamydia caviae (strain ATCC VR-813 / DSM 19441 / 03DC25 / GPIC) (Chlamydophila caviae)).